The chain runs to 424 residues: 3-phosphoshikimate 1-carboxyvinyltransferase (424 aa).

Residues Lys21, Ser22, and Arg26 each coordinate 3-phosphoshikimate. Lys21 lines the phosphoenolpyruvate pocket. Phosphoenolpyruvate-binding residues include Gly92 and Arg120. 3-phosphoshikimate is bound by residues Ser163, Ser164, Gln165, Ser191, Asp306, and Lys333. Gln165 is a binding site for phosphoenolpyruvate. The active-site Proton acceptor is Asp306. Phosphoenolpyruvate contacts are provided by Arg337, Arg379, and Lys405.

Belongs to the EPSP synthase family. In terms of assembly, monomer.

The protein localises to the cytoplasm. The enzyme catalyses 3-phosphoshikimate + phosphoenolpyruvate = 5-O-(1-carboxyvinyl)-3-phosphoshikimate + phosphate. Its pathway is metabolic intermediate biosynthesis; chorismate biosynthesis; chorismate from D-erythrose 4-phosphate and phosphoenolpyruvate: step 6/7. Functionally, catalyzes the transfer of the enolpyruvyl moiety of phosphoenolpyruvate (PEP) to the 5-hydroxyl of shikimate-3-phosphate (S3P) to produce enolpyruvyl shikimate-3-phosphate and inorganic phosphate. The sequence is that of 3-phosphoshikimate 1-carboxyvinyltransferase from Clostridium perfringens (strain ATCC 13124 / DSM 756 / JCM 1290 / NCIMB 6125 / NCTC 8237 / Type A).